The following is a 345-amino-acid chain: Alkaline phosphatase isozyme conversion protein (345 aa).

Positions 1–24 (MFSALRHRTAALALGVCFILPVHA) are cleaved as a signal peptide. Residues H117, D143, E176, and D204 each contribute to the Zn(2+) site.

The protein belongs to the peptidase M28 family. M28C subfamily.

In terms of biological role, this protein, presumably an aminopeptidase, mediates the conversion of E.coli alkaline phosphatase isozyme 1, to isozymes 2 and 3 by removing, one by one, the two N-terminal arginine residues. In Escherichia coli (strain K12), this protein is Alkaline phosphatase isozyme conversion protein (iap).